The primary structure comprises 309 residues: Mitogen-activated protein kinase kinase 8 (309 aa).

The region spanning 53-305 is the Protein kinase domain; it reads LDRISVLGSG…ASQLLNHPFL (253 aa). Residues 59–67 and lysine 82 each bind ATP; that span reads LGSGNGGTV. The active-site Proton acceptor is the aspartate 167. Residues serine 195 and serine 201 each carry the phosphoserine modification. A Phosphothreonine modification is found at threonine 205.

Belongs to the protein kinase superfamily. STE Ser/Thr protein kinase family. MAP kinase kinase subfamily. In terms of processing, phosphorylation at Ser-195 and Ser-201 by MAP kinase kinase kinases positively regulates kinase activity.

The catalysed reaction is L-seryl-[protein] + ATP = O-phospho-L-seryl-[protein] + ADP + H(+). It catalyses the reaction L-threonyl-[protein] + ATP = O-phospho-L-threonyl-[protein] + ADP + H(+). It carries out the reaction L-tyrosyl-[protein] + ATP = O-phospho-L-tyrosyl-[protein] + ADP + H(+). This is Mitogen-activated protein kinase kinase 8 (MKK8) from Arabidopsis thaliana (Mouse-ear cress).